We begin with the raw amino-acid sequence, 146 residues long: D-aminoacyl-tRNA deacylase (146 aa).

The Gly-cisPro motif, important for rejection of L-amino acids motif lies at 137-138; it reads GP.

Belongs to the DTD family. Homodimer.

The protein resides in the cytoplasm. The catalysed reaction is glycyl-tRNA(Ala) + H2O = tRNA(Ala) + glycine + H(+). It carries out the reaction a D-aminoacyl-tRNA + H2O = a tRNA + a D-alpha-amino acid + H(+). Functionally, an aminoacyl-tRNA editing enzyme that deacylates mischarged D-aminoacyl-tRNAs. Also deacylates mischarged glycyl-tRNA(Ala), protecting cells against glycine mischarging by AlaRS. Acts via tRNA-based rather than protein-based catalysis; rejects L-amino acids rather than detecting D-amino acids in the active site. By recycling D-aminoacyl-tRNA to D-amino acids and free tRNA molecules, this enzyme counteracts the toxicity associated with the formation of D-aminoacyl-tRNA entities in vivo and helps enforce protein L-homochirality. The protein is D-aminoacyl-tRNA deacylase of Bacillus cereus (strain Q1).